The following is an 884-amino-acid chain: MFNFLFNSSNQRKINSYAPIVKKINALEIEMQDLPDKVLRAKSVQFKSRLQNGENLDDILVEAFAVVREAGLRVLGLRVFDVQMMGAIILHQGKIAEMKTGEGKTLVATLAGYLNALSGEGVHVVTVNDYLAKRDSEWVGQIHKFLGLSVGLIQQALPKVERKLAYQCDVTYVTNSELGFDYLKDNMVLSMSEIVQNKFAFCIIDEVDSILIDEARTPLIISGPSEAPIEKYSRTKLLANILSKDVHYEVDEKARNIILTEQGTLFCEEYLSINNLYDLENPWVQYILNAIKARELFTKDVHYIIRDKEVVIVDEFTGRIMSGRRWSDGLHQAIEAKEDVVIQQENQTYASITYQNFFLLYPKLSGMTGTAKTEESELDKIYNLEVICVPTHKPLRRKEFPDLVYSNEYRKWEAIADECYDMYRVGRPTLVGTTSVEKSELLSKLLNQYKIPHSLLNAKPENVEKESDIIAQAGRQSSVTIATNMAGRGTDIILGGNPSYIAKSILVDLLIGKSSVKNNYKLQQLSPNTKISLNNILNALETDLHSVDFSMLEMEKKISIACEQVLTDDKLEIQLRKAYQMIFEEFETIFSKEREYVSQAGGLHVIGTERHESRRIDNQLRGRAGRQGDPGSSRFFLSVDDNLLRIFGGNKIADLMQALNVDNDTPMESTLLSKSLEAAQKKVEAYFYDTRKQVFEYDQVLNSQRQAIYAERRRILESSYPRDCVLQYAESTIDDIITFWLTSKENPEKFVNLNIKIKYLLNAADTFSISKDLYKDSEELKKWIIEQVRINYDLREAYLEQIKPGLIRQLEKYYLLQQIDNAWKDHLQKMGALRDSIGWRSYGQQDPLVEYKNEAFNLFIEMITHVKHTVVYAILRSRLMMKND.

Residues Q83, 101–105, and D491 each bind ATP; that span reads GEGKT.

Belongs to the SecA family.

The protein localises to the plastid. It localises to the chloroplast stroma. The protein resides in the chloroplast thylakoid membrane. The catalysed reaction is ATP + H2O + cellular proteinSide 1 = ADP + phosphate + cellular proteinSide 2.. Has a central role in coupling the hydrolysis of ATP to the transfer of proteins across the thylakoid membrane. This is Protein translocase subunit SecA from Pyropia yezoensis (Susabi-nori).